Here is a 317-residue protein sequence, read N- to C-terminus: tRNA dimethylallyltransferase (317 aa).

14–21 (GPTAVGKT) is an ATP binding site. 16–21 (TAVGKT) serves as a coordination point for substrate. The interaction with substrate tRNA stretch occupies residues 39–42 (DSMQ).

Belongs to the IPP transferase family. Monomer. Requires Mg(2+) as cofactor.

The catalysed reaction is adenosine(37) in tRNA + dimethylallyl diphosphate = N(6)-dimethylallyladenosine(37) in tRNA + diphosphate. Functionally, catalyzes the transfer of a dimethylallyl group onto the adenine at position 37 in tRNAs that read codons beginning with uridine, leading to the formation of N6-(dimethylallyl)adenosine (i(6)A). In Bacillus cereus (strain ATCC 10987 / NRS 248), this protein is tRNA dimethylallyltransferase.